A 1764-amino-acid chain; its full sequence is Nucleolar pre-ribosomal-associated protein 1 (1764 aa).

Residues 1 to 23 (MSNHSEAYGSRDQRREKYTQGKE) form a disordered region. Residues 9–23 (GSRDQRREKYTQGKE) show a composition bias toward basic and acidic residues.

As to quaternary structure, associates with pre-60S ribosomal particles. Predominantly associated with the 27SA2 pre-rRNA. Can associate with a subset of box H/ACA and box C/D small nucleolar RNPs (snoRNPs) required for peptidyl transferase center modification and with small RNAs snR37 and snR42. Interacts with URB2. Together with DBP6, NOP8, URB2 and RSA3, forms an RNA-independent complex, which is required during early maturation of nascent 60S ribosomal subunits.

The protein localises to the nucleus. It is found in the nucleolus. Functionally, required for 60S ribosomal subunit formation and pre-rRNA processing. Required for normal accumulation of 25S and 5.8S rRNAs. The protein is Nucleolar pre-ribosomal-associated protein 1 (URB1) of Saccharomyces cerevisiae (strain ATCC 204508 / S288c) (Baker's yeast).